The sequence spans 650 residues: Chaperone protein DnaK (650 aa).

Phosphothreonine; by autocatalysis is present on threonine 200.

The protein belongs to the heat shock protein 70 family.

Acts as a chaperone. The protein is Chaperone protein DnaK of Paraburkholderia phytofirmans (strain DSM 17436 / LMG 22146 / PsJN) (Burkholderia phytofirmans).